Consider the following 490-residue polypeptide: Betaine aldehyde dehydrogenase (490 aa).

Thr26 and Asp93 together coordinate K(+). NAD(+) is bound at residue 150-152 (GAW). Lys162 (charge relay system) is an active-site residue. NAD(+) is bound at residue 176–179 (KPSE). A K(+)-binding site is contributed by Val180. NAD(+) is bound at residue 230-233 (GVAT). K(+) is bound at residue Leu246. Catalysis depends on Glu252, which acts as the Proton acceptor. NAD(+)-binding residues include Gly254, Cys286, and Glu387. Catalysis depends on Cys286, which acts as the Nucleophile. At Cys286 the chain carries Cysteine sulfenic acid (-SOH). Residues Lys457 and Gly460 each coordinate K(+). Glu464 serves as the catalytic Charge relay system.

Belongs to the aldehyde dehydrogenase family. Dimer of dimers. The cofactor is K(+).

The catalysed reaction is betaine aldehyde + NAD(+) + H2O = glycine betaine + NADH + 2 H(+). The protein operates within amine and polyamine biosynthesis; betaine biosynthesis via choline pathway; betaine from betaine aldehyde: step 1/1. Involved in the biosynthesis of the osmoprotectant glycine betaine. Catalyzes the irreversible oxidation of betaine aldehyde to the corresponding acid. The polypeptide is Betaine aldehyde dehydrogenase (Stenotrophomonas maltophilia (strain R551-3)).